The following is a 39-amino-acid chain: Potassium channel toxin alpha-KTx 2.23 (39 aa).

Disulfide bonds link cysteine 7/cysteine 29, cysteine 13/cysteine 34, and cysteine 17/cysteine 36.

As to expression, expressed by the venom gland.

It is found in the secreted. Blocks human voltage-gated potassium (Kv) channels Kv1.1/KCNA1, Kv1.2/KCNA2 and Kv1.3/KCNA3. This chain is Potassium channel toxin alpha-KTx 2.23, found in Centruroides bonito (Scorpion).